We begin with the raw amino-acid sequence, 222 residues long: Transmembrane reductase CYB561D2 (222 aa).

The Cytoplasmic segment spans residues A2–T17. In terms of domain architecture, Cytochrome b561 spans A14–R217. Residues A18–A38 form a helical membrane-spanning segment. The Lumenal portion of the chain corresponds to R39–S46. The chain crosses the membrane as a helical span at residues W47 to F67. H48 is a heme b binding site. The Cytoplasmic segment spans residues S68–C85. Residues H86 and H120 each coordinate heme b. Residues H86–L106 form a helical membrane-spanning segment. Over H107–Q122 the chain is Lumenal. The chain crosses the membrane as a helical span at residues A123–Y143. At P144–S162 the chain is on the cytoplasmic side. Heme b is bound at residue H159. A helical membrane pass occupies residues G163–F183. Topologically, residues T184 to T186 are lumenal. Residues V187–M207 traverse the membrane as a helical segment. Topologically, residues N208–P222 are cytoplasmic.

Requires heme b as cofactor. As to expression, highly expressed in the brain, lung, liver, and kidney. Moderately expressed in the heart, placenta, skeletal muscle, and pancreas.

It is found in the endoplasmic reticulum membrane. Its subcellular location is the cytoplasmic vesicle membrane. It carries out the reaction monodehydro-L-ascorbate radical(out) + L-ascorbate(in) = monodehydro-L-ascorbate radical(in) + L-ascorbate(out). It catalyses the reaction Fe(3+)(out) + L-ascorbate(in) = monodehydro-L-ascorbate radical(in) + Fe(2+)(out) + H(+). Transmembrane reductase that may use ascorbate as an electron donor in the cytoplasm and transfer electrons across endoplasmic reticulum membranes to reduce monodehydro-L-ascorbate radical and iron cations Fe(3+) in the lumen of that compartment. In Mus musculus (Mouse), this protein is Transmembrane reductase CYB561D2.